We begin with the raw amino-acid sequence, 391 residues long: RNA-binding motif protein, X chromosome (391 aa).

At Met1 the chain carries N-acetylmethionine; in Heterogeneous nuclear ribonucleoprotein G; alternate. At Val2 the chain carries N-acetylvaline; in Heterogeneous nuclear ribonucleoprotein G, N-terminally processed. The RRM domain maps to 8-86; that stretch reads GKLFIGGLNT…KAIKVEQATK (79 aa). Residue Lys22 forms a Glycyl lysine isopeptide (Lys-Gly) (interchain with G-Cter in SUMO2) linkage. Lys30 is modified (N6-acetyllysine). A compositionally biased stretch (basic and acidic residues) spans 61-80; that stretch reads DAKDAARDMNGKSLDGKAIK. The segment at 61-391 is disordered; the sequence is DAKDAARDMN…SDRGGGRSRY (331 aa). Glycyl lysine isopeptide (Lys-Gly) (interchain with G-Cter in SUMO2) cross-links involve residues Lys80 and Lys86. 2 positions are modified to phosphoserine: Ser88 and Ser91. A compositionally biased stretch (gly residues) spans 109–120; the sequence is LRGGRGGSGGTR. 3 positions are modified to omega-N-methylarginine: Arg125, Arg144, and Arg164. The segment covering 151-164 has biased composition (pro residues); that stretch reads RGPPPRSGGPPPKR. Ser165 carries the phosphoserine modification. At Arg172 the chain carries Omega-N-methylarginine. A Phosphoserine modification is found at Ser174. Residues 186–236 form a necessary for the association to nascent RNAPII transcripts and nuclear localization region; the sequence is GRDSYGGPPRREPLPSRRDVYLSPRDDGYSTKDSYSSRDYPSSRDTRDYAP. Basic and acidic residues-rich tracts occupy residues 194–215 and 241–274; these read PRRE…DGYS and YTYR…DYSD. 5 positions are modified to phosphoserine: Ser261, Ser328, Ser329, Ser330, and Ser332. The span at 323–337 shows a compositional bias: low complexity; sequence SRDSYSSSRSDLYSS. Residues 333–391 are necessary for RNA-binding; it reads DLYSSGRDRVGRQERGLPPSMERGYPPPRDSYSSSSRGAPRGGGRGGSRSDRGGGRSRY. Basic and acidic residues predominate over residues 338–347; the sequence is GRDRVGRQER. Ser352 carries the phosphoserine modification. Residues 362–371 are compositionally biased toward low complexity; sequence DSYSSSSRGA. Basic and acidic residues predominate over residues 380-391; sequence SRSDRGGGRSRY.

Homomultimer. Found in the supraspliceosome complex. Identified in the spliceosome C complex. Forms a complex with ILF2, ILF3, YLPM1, KHDRBS1, NCOA5 and PPP1CA. Interacts with CLK2, KHDRBS2, KHDRBS3, SAFB/SAFB1, TRA2B and YTHDC1. Interacts with ERAP1; the interaction is RNA-independent. Interacts with PPIA/CYPA. O-glycosylated. Post-translationally, arg-185 is dimethylated, probably to asymmetric dimethylarginine.

The protein localises to the nucleus. Functionally, RNA-binding protein that plays several role in the regulation of pre- and post-transcriptional processes. Implicated in tissue-specific regulation of gene transcription and alternative splicing of several pre-mRNAs. Binds to and stimulates transcription from the tumor suppressor TXNIP gene promoter; may thus be involved in tumor suppression. When associated with SAFB, binds to and stimulates transcription from the SREBF1 promoter. Associates with nascent mRNAs transcribed by RNA polymerase II. Component of the supraspliceosome complex that regulates pre-mRNA alternative splice site selection. Can either activate or suppress exon inclusion; acts additively with TRA2B to promote exon 7 inclusion of the survival motor neuron SMN2. Represses the splicing of MAPT/Tau exon 10. Binds preferentially to single-stranded 5'-CC[A/C]-rich RNA sequence motifs localized in a single-stranded conformation; probably binds RNA as a homodimer. Binds non-specifically to pre-mRNAs. Also plays a role in the cytoplasmic TNFR1 trafficking pathways; promotes both the IL-1-beta-mediated inducible proteolytic cleavage of TNFR1 ectodomains and the release of TNFR1 exosome-like vesicles to the extracellular compartment. In Pan troglodytes (Chimpanzee), this protein is RNA-binding motif protein, X chromosome (RBMX).